A 362-amino-acid chain; its full sequence is Heat-inducible transcription repressor HrcA (362 aa).

This sequence belongs to the HrcA family.

Its function is as follows. Negative regulator of class I heat shock genes (grpE-dnaK-dnaJ and groELS operons). Prevents heat-shock induction of these operons. The protein is Heat-inducible transcription repressor HrcA of Bradyrhizobium sp. (strain BTAi1 / ATCC BAA-1182).